The chain runs to 200 residues: Transcription elongation factor A protein-like 3 (200 aa).

A disordered region spans residues Met-1 to Leu-200. Positions Asp-20–Pro-36 are enriched in acidic residues. The residue at position 30 (Ser-30) is a Phosphoserine. Residues Asp-37 to Asp-50 show a composition bias toward basic and acidic residues. Positions Glu-51–Gly-64 are enriched in acidic residues. The residue at position 65 (Ser-65) is a Phosphoserine. Basic and acidic residues-rich tracts occupy residues Ser-65–Gly-80, Ala-96–Pro-107, and Asp-115–Arg-154.

It belongs to the TFS-II family. TFA subfamily.

It localises to the nucleus. Functionally, may be involved in transcriptional regulation. The polypeptide is Transcription elongation factor A protein-like 3 (TCEAL3) (Homo sapiens (Human)).